Consider the following 251-residue polypeptide: Carbohydrate deacetylase (251 aa).

Residues histidine 59 and histidine 122 each coordinate Mg(2+).

The protein belongs to the YdjC deacetylase family. As to quaternary structure, homodimer. Requires Mg(2+) as cofactor.

Functionally, probably catalyzes the deacetylation of acetylated carbohydrates an important step in the degradation of oligosaccharides. The polypeptide is Carbohydrate deacetylase (Vibrio parahaemolyticus serotype O3:K6 (strain RIMD 2210633)).